The sequence spans 950 residues: Translation initiation factor IF-2 (950 aa).

Disordered regions lie at residues 57–254 (LAER…AVVI) and 304–328 (DVSR…KSLS). Composition is skewed to low complexity over residues 101 to 131 (AEPQ…EPAA) and 139 to 169 (AAPL…QPAA). Over residues 170–215 (PAAPPAPTAQPSAPPPAAAQPRPPQPSAPSRPPPPGYRPAPPPGAR) the composition is skewed to pro residues. Positions 216–233 (PPVSAAPGAPGQPGAAGQ) are enriched in low complexity. Residues 449 to 618 (IRPPVVTVMG…ALQSEVLELK (170 aa)) enclose the tr-type G domain. The segment at 458-465 (GHVDHGKT) is G1. Position 458–465 (458–465 (GHVDHGKT)) interacts with GTP. The G2 stretch occupies residues 483-487 (GITQH). The tract at residues 504–507 (DTPG) is G3. Residues 504–508 (DTPGH) and 558–561 (NKVD) contribute to the GTP site. The G4 stretch occupies residues 558 to 561 (NKVD). The segment at 594–596 (SAR) is G5.

This sequence belongs to the TRAFAC class translation factor GTPase superfamily. Classic translation factor GTPase family. IF-2 subfamily.

It is found in the cytoplasm. One of the essential components for the initiation of protein synthesis. Protects formylmethionyl-tRNA from spontaneous hydrolysis and promotes its binding to the 30S ribosomal subunits. Also involved in the hydrolysis of GTP during the formation of the 70S ribosomal complex. This Anaeromyxobacter dehalogenans (strain 2CP-C) protein is Translation initiation factor IF-2.